Reading from the N-terminus, the 177-residue chain is Large ribosomal subunit protein uL6 (177 aa).

This sequence belongs to the universal ribosomal protein uL6 family. As to quaternary structure, part of the 50S ribosomal subunit.

In terms of biological role, this protein binds to the 23S rRNA, and is important in its secondary structure. It is located near the subunit interface in the base of the L7/L12 stalk, and near the tRNA binding site of the peptidyltransferase center. The protein is Large ribosomal subunit protein uL6 of Saccharophagus degradans (strain 2-40 / ATCC 43961 / DSM 17024).